We begin with the raw amino-acid sequence, 127 residues long: Large ribosomal subunit protein bL20 (127 aa).

Belongs to the bacterial ribosomal protein bL20 family.

Binds directly to 23S ribosomal RNA and is necessary for the in vitro assembly process of the 50S ribosomal subunit. It is not involved in the protein synthesizing functions of that subunit. The protein is Large ribosomal subunit protein bL20 (rplT) of Streptomyces coelicolor (strain ATCC BAA-471 / A3(2) / M145).